The primary structure comprises 317 residues: Putative HTH-type transcriptional regulatory protein NP_1320A (317 aa).

The 58-residue stretch at 132–189 (LSDIRSQEDMSLGKLANELGVSRRTVSKYEDGMSASVEVAAELEEIFDRKLASPVEVL) folds into the HTH cro/C1-type domain. A DNA-binding region (H-T-H motif) is located at residues 143–162 (LGKLANELGVSRRTVSKYED).

The chain is Putative HTH-type transcriptional regulatory protein NP_1320A from Natronomonas pharaonis (strain ATCC 35678 / DSM 2160 / CIP 103997 / JCM 8858 / NBRC 14720 / NCIMB 2260 / Gabara) (Halobacterium pharaonis).